The chain runs to 63 residues: Small ribosomal subunit protein eS30B (63 aa).

The tract at residues 1 to 35 (MAKVHGSLARAGKVKSQTPKVEKTEKPKKPKGRAY) is disordered. Position 16 is a phosphoserine (Ser-16). Phosphothreonine is present on Thr-48.

This sequence belongs to the eukaryotic ribosomal protein eS30 family. Component of the small ribosomal subunit (SSU). Mature yeast ribosomes consist of a small (40S) and a large (60S) subunit. The 40S small subunit contains 1 molecule of ribosomal RNA (18S rRNA) and 33 different proteins (encoded by 57 genes). The large 60S subunit contains 3 rRNA molecules (25S, 5.8S and 5S rRNA) and 46 different proteins (encoded by 81 genes).

The protein resides in the cytoplasm. In terms of biological role, component of the ribosome, a large ribonucleoprotein complex responsible for the synthesis of proteins in the cell. The small ribosomal subunit (SSU) binds messenger RNAs (mRNAs) and translates the encoded message by selecting cognate aminoacyl-transfer RNA (tRNA) molecules. The large subunit (LSU) contains the ribosomal catalytic site termed the peptidyl transferase center (PTC), which catalyzes the formation of peptide bonds, thereby polymerizing the amino acids delivered by tRNAs into a polypeptide chain. The nascent polypeptides leave the ribosome through a tunnel in the LSU and interact with protein factors that function in enzymatic processing, targeting, and the membrane insertion of nascent chains at the exit of the ribosomal tunnel. The protein is Small ribosomal subunit protein eS30B of Saccharomyces cerevisiae (strain ATCC 204508 / S288c) (Baker's yeast).